Reading from the N-terminus, the 222-residue chain is Latexin (222 aa).

A Cystatin LXN-type 1 domain is found at Met-1 to Lys-97. An N6-acetyllysine modification is found at Lys-55. Positions Asn-98–Leu-117 are alpha-helical linker. One can recognise a Cystatin LXN-type 2 domain in the interval Glu-118–Glu-222.

The protein belongs to the protease inhibitor I47 (latexin) family. In terms of tissue distribution, highly expressed in heart, prostate, ovary, kidney, pancreas, and colon, moderate or low in other tissues including brain.

The protein localises to the cytoplasm. Hardly reversible, non-competitive, and potent inhibitor of CPA1, CPA2 and CPA4. May play a role in inflammation. The sequence is that of Latexin (LXN) from Homo sapiens (Human).